A 76-amino-acid chain; its full sequence is Sec-independent protein translocase protein TatA (76 aa).

A helical transmembrane segment spans residues 1–21 (MGGISIWQLLIIALIVVLLFG). Residues 43-76 (MSSEDEKKAIEDTSAEKTAQTEEKKTESKDKEQA) form a disordered region. Positions 46–76 (EDEKKAIEDTSAEKTAQTEEKKTESKDKEQA) are enriched in basic and acidic residues.

It belongs to the TatA/E family. The Tat system comprises two distinct complexes: a TatABC complex, containing multiple copies of TatA, TatB and TatC subunits, and a separate TatA complex, containing only TatA subunits. Substrates initially bind to the TatABC complex, which probably triggers association of the separate TatA complex to form the active translocon.

Its subcellular location is the cell inner membrane. Functionally, part of the twin-arginine translocation (Tat) system that transports large folded proteins containing a characteristic twin-arginine motif in their signal peptide across membranes. TatA could form the protein-conducting channel of the Tat system. The polypeptide is Sec-independent protein translocase protein TatA (Shewanella loihica (strain ATCC BAA-1088 / PV-4)).